A 1284-amino-acid polypeptide reads, in one-letter code: ABC multidrug transporter atrC (1284 aa).

Basic and acidic residues predominate over residues M1–P11. The segment at M1–E24 is disordered. 6 helical membrane-spanning segments follow: residues A55–F75, A99–T119, I178–V198, T203–V223, L282–F302, and I320–Y340. Positions A55–R346 constitute an ABC transmembrane type-1 1 domain. An ABC transporter 1 domain is found at V381–I626. N385 and N401 each carry an N-linked (GlcNAc...) asparagine glycan. Residue G416 to S423 coordinates ATP. 2 N-linked (GlcNAc...) asparagine glycosylation sites follow: N488 and N632. The next 2 helical transmembrane spans lie at L705–M725 and F745–G765. The 288-residue stretch at L705 to K992 folds into the ABC transmembrane type-1 2 domain. A glycan (N-linked (GlcNAc...) asparagine) is linked at N800. 4 helical membrane passes run I824–F844, W846–V866, M931–Y951, and L955–F975. The N-linked (GlcNAc...) asparagine glycan is linked to N995. An ABC transporter 2 domain is found at I1027–A1280. An ATP-binding site is contributed by G1062 to S1069. N1122 carries an N-linked (GlcNAc...) asparagine glycan.

The protein belongs to the ABC transporter superfamily. ABCB family. Multidrug resistance exporter (TC 3.A.1.201) subfamily.

Its subcellular location is the cell membrane. Its function is as follows. Pleiotropic ABC efflux transporter involved in the protection of the cells against a wide range of toxic compounds. The chain is ABC multidrug transporter atrC from Emericella nidulans (strain FGSC A4 / ATCC 38163 / CBS 112.46 / NRRL 194 / M139) (Aspergillus nidulans).